The chain runs to 236 residues: MTRRYWNINLEEMMEAGVHFGHGIKKWNPRMAPYIYANRKGIHITNLTKTARFLAEACDLVFDAASRGGQFLIVGTKKQAAALVARAAIKARCHYVNKKWLGGMLTNWSTTETRLHQFRDLRTEQKTGRLNRLPKRDAAILKRQLSHLQTYLGGIKYMTGLPDILIILDQQEEYTALRECITLGIPTICLIDTDCDPDLADLPIPANDDAMASIRLILNKLVFAICEGRSSSIRNP.

The protein belongs to the universal ribosomal protein uS2 family.

It localises to the plastid. Its subcellular location is the chloroplast. This chain is Small ribosomal subunit protein uS2c (rps2), found in Oenothera biennis (German evening primrose).